Here is a 209-residue protein sequence, read N- to C-terminus: DNA ADP-ribosyl transferase (209 aa).

Residues 9–209 (TPIYHITHID…RVCIRKDWYY (201 aa)) form the DarT domain. NAD(+) is bound by residues 13 to 15 (HIT), Gly-22, and Leu-30. The tract at residues 35–53 (SPPKQRSIAYAHIQERRNR) is NAD(+)-binding element. The DNA-binding element occupies 44 to 50 (YAHIQER). Arg-51 is a binding site for NAD(+). Arg-51 acts as the Proton acceptor in catalysis. 3 DNA-binding regions span residues 75–80 (RSPMLY), 145–148 (SYWA), and 154–158 (REKKQ). Residues 116-160 (TDRHGVLSHARFFRQLEELAQLDWEAIQASYWADPPELREKKQAE) form an ADP-ribosylating turn-turn loop region. Glu-160 is a catalytic residue.

It belongs to the DarT ADP-ribosyltransferase family. In terms of assembly, interacts with cognate antitoxin DarG (via C-terminus); this heterodimeric complex neutralizes the toxic effect of DarT by preventing ssDNA binding to DarT and consequently inactivating the toxin by direct protein-protein interactions.

The catalysed reaction is a thymidine in DNA + NAD(+) = an N-(ADP-alpha-D-ribosyl)-thymidine in DNA + nicotinamide + H(+). Its function is as follows. Toxic component of the hybrid type II/IV toxin-antitoxin (TA) system DarTG, which plays a crucial role in controlling bacterial growth and bacteriophage infection. In case of phage infection, DarT toxin ADP-ribosylates DNA, which inhibits both viral DNA and RNA synthesis and leads to abortive infection. ADP-ribosylates ssDNA on the second thymidine of the consensus sequence 5'-TNTC-3'; the protein does not auto-modify. Arg-51 is highly flexible, allowing it to assume multiple positions in the crystal structures. Its toxic effect is neutralized by cognate antitoxin DarG. This chain is DNA ADP-ribosyl transferase, found in Thermus sp. (strain 2.9).